The following is a 61-amino-acid chain: Double gene block protein 1 (61 aa).

The tract at residues 15–45 (LAGNRGKQKTRRSVAKDAIRKPASDSTNGGN) is disordered. An RNA-binding region spans residues 17–35 (GNRGKQKTRRSVAKDAIRK). Positions 28-37 (VAKDAIRKPA) are enriched in basic and acidic residues.

It belongs to the carmovirus double gene block protein 1 family. As to quaternary structure, homodimer.

In terms of biological role, cell-to-cell movement. Displays RNA-binding activity. This Carnation mottle virus (isolate China/Shanghai) (CarMV) protein is Double gene block protein 1.